The chain runs to 236 residues: Ubiquinone biosynthesis O-methyltransferase (236 aa).

Arg-39, Gly-59, Asp-80, and Met-124 together coordinate S-adenosyl-L-methionine.

This sequence belongs to the methyltransferase superfamily. UbiG/COQ3 family.

It carries out the reaction a 3-demethylubiquinol + S-adenosyl-L-methionine = a ubiquinol + S-adenosyl-L-homocysteine + H(+). The enzyme catalyses a 3-(all-trans-polyprenyl)benzene-1,2-diol + S-adenosyl-L-methionine = a 2-methoxy-6-(all-trans-polyprenyl)phenol + S-adenosyl-L-homocysteine + H(+). It participates in cofactor biosynthesis; ubiquinone biosynthesis. O-methyltransferase that catalyzes the 2 O-methylation steps in the ubiquinone biosynthetic pathway. This Pseudoalteromonas translucida (strain TAC 125) protein is Ubiquinone biosynthesis O-methyltransferase.